Here is a 131-residue protein sequence, read N- to C-terminus: MKAVSPVRPQSRKAQVPSVCGELALHCLSEHSLGVARYKMEEEETLCLQYDMNDCYSRLKRLVPTIPPNKKVSKVEILQHVIDYILDLQLALDTHPVLLRQQPPTRTPLTDLNTDPAALVVNKQGDSILCR.

The region spanning 36 to 88 is the bHLH domain; sequence ARYKMEEEETLCLQYDMNDCYSRLKRLVPTIPPNKKVSKVEILQHVIDYILDL.

As to quaternary structure, heterodimer with other HLH proteins. As to expression, during embryonic development, expressed in a number of neural tissues, including Rohon-Beard neurons, olfactory placode, eye primordia, and the trigeminal ganglia. Also expressed in other organs including the pronephros and liver primordium. Pronephric development begins by stage 25 and increases during tailbud stages. Expressed in both the tubules and the duct. As embryogenesis progresses, expressed in the migrating melanocytes and lateral line structures.

It is found in the nucleus. In terms of biological role, transcriptional regulator (lacking a basic DNA binding domain) which negatively regulates the basic helix-loop-helix (bHLH) transcription factors by forming heterodimers and inhibiting their DNA binding and transcriptional activity. Inhibits the activity of both neurogenic (neurog1/neurogenin, neurod1/neuroD) and myogenic (myod1/myoD) bHLH factors. The sequence is that of DNA-binding protein inhibitor ID-4 from Xenopus laevis (African clawed frog).